The primary structure comprises 374 residues: UDP-N-acetylglucosamine--N-acetylmuramyl-(pentapeptide) pyrophosphoryl-undecaprenol N-acetylglucosamine transferase (374 aa).

UDP-N-acetyl-alpha-D-glucosamine is bound by residues 35-37, asparagine 144, arginine 185, serine 211, and glutamine 305; that span reads TGG.

Belongs to the glycosyltransferase 28 family. MurG subfamily.

Its subcellular location is the cell inner membrane. It catalyses the reaction di-trans,octa-cis-undecaprenyl diphospho-N-acetyl-alpha-D-muramoyl-L-alanyl-D-glutamyl-meso-2,6-diaminopimeloyl-D-alanyl-D-alanine + UDP-N-acetyl-alpha-D-glucosamine = di-trans,octa-cis-undecaprenyl diphospho-[N-acetyl-alpha-D-glucosaminyl-(1-&gt;4)]-N-acetyl-alpha-D-muramoyl-L-alanyl-D-glutamyl-meso-2,6-diaminopimeloyl-D-alanyl-D-alanine + UDP + H(+). The protein operates within cell wall biogenesis; peptidoglycan biosynthesis. Cell wall formation. Catalyzes the transfer of a GlcNAc subunit on undecaprenyl-pyrophosphoryl-MurNAc-pentapeptide (lipid intermediate I) to form undecaprenyl-pyrophosphoryl-MurNAc-(pentapeptide)GlcNAc (lipid intermediate II). This Trichodesmium erythraeum (strain IMS101) protein is UDP-N-acetylglucosamine--N-acetylmuramyl-(pentapeptide) pyrophosphoryl-undecaprenol N-acetylglucosamine transferase.